The chain runs to 465 residues: Gamma-aminobutyric acid receptor subunit gamma-1 (465 aa).

Residues 1–35 (MGPLKAFLFSPFLLRSQSRGVRLVFLLLTLHLGNC) form the signal peptide. Topologically, residues 36–273 (VDKADDEDDE…FDLSRRMGYF (238 aa)) are extracellular. Residues Asn-50 and Asn-127 are each glycosylated (N-linked (GlcNAc...) asparagine). Residues Cys-188 and Cys-202 are joined by a disulfide bond. A glycan (N-linked (GlcNAc...) asparagine) is linked at Asn-245. A helical transmembrane segment spans residues 274–294 (TIQTYIPCILTVVLSWVSFWI). At 295–300 (NKDAVP) the chain is on the cytoplasmic side. Residues 301–320 (ARTSLGITTVLTMTTLSTIA) form a helical membrane-spanning segment. The Extracellular portion of the chain corresponds to 321–328 (RKSLPKVS). Residues 329 to 349 (YVTAMDLFVSVCFIFVFAALM) traverse the membrane as a helical segment. At 350–444 (EYGTLHYFTS…RIAKIDSYSR (95 aa)) the chain is on the cytoplasmic side. The helical transmembrane segment at 445–465 (IFFPTAFALFNLVYWVGYLYL) threads the bilayer.

This sequence belongs to the ligand-gated ion channel (TC 1.A.9) family. Gamma-aminobutyric acid receptor (TC 1.A.9.5) subfamily. GABRG1 sub-subfamily. As to quaternary structure, heteropentamer, formed by a combination of alpha (GABRA1-6), beta (GABRB1-3), gamma (GABRG1-3), delta (GABRD), epsilon (GABRE), rho (GABRR1-3), pi (GABRP) and theta (GABRQ) chains, each subunit exhibiting distinct physiological and pharmacological properties. In terms of processing, may be palmitoylated.

Its subcellular location is the postsynaptic cell membrane. The protein localises to the cell membrane. It catalyses the reaction chloride(in) = chloride(out). In terms of biological role, gamma subunit of the heteropentameric ligand-gated chloride channel gated by gamma-aminobutyric acid (GABA), a major inhibitory neurotransmitter in the brain. GABA-gated chloride channels, also named GABA(A) receptors (GABAAR), consist of five subunits arranged around a central pore and contain GABA active binding site(s) located at the alpha and beta subunit interface(s). When activated by GABA, GABAARs selectively allow the flow of chloride anions across the cell membrane down their electrochemical gradient. Chloride influx into the postsynaptic neuron following GABAAR opening decreases the neuron ability to generate a new action potential, thereby reducing nerve transmission. The sequence is that of Gamma-aminobutyric acid receptor subunit gamma-1 from Homo sapiens (Human).